Consider the following 160-residue polypeptide: Phosphopantetheine adenylyltransferase (160 aa).

A substrate-binding site is contributed by T11. ATP contacts are provided by residues 11–12 (TF) and H19. Substrate contacts are provided by K43, T75, and R89. Residues 90 to 92 (GLR), E100, and 125 to 131 (YSFLSSS) contribute to the ATP site.

It belongs to the bacterial CoaD family. In terms of assembly, homohexamer. The cofactor is Mg(2+).

Its subcellular location is the cytoplasm. It catalyses the reaction (R)-4'-phosphopantetheine + ATP + H(+) = 3'-dephospho-CoA + diphosphate. The protein operates within cofactor biosynthesis; coenzyme A biosynthesis; CoA from (R)-pantothenate: step 4/5. Reversibly transfers an adenylyl group from ATP to 4'-phosphopantetheine, yielding dephospho-CoA (dPCoA) and pyrophosphate. The chain is Phosphopantetheine adenylyltransferase from Listeria monocytogenes serotype 4b (strain CLIP80459).